Here is a 254-residue protein sequence, read N- to C-terminus: Ribonuclease HII (254 aa).

One can recognise an RNase H type-2 domain in the interval 46–234 (KLIAGIDEVG…VWMASAPQEV (189 aa)). Positions 52, 53, and 144 each coordinate a divalent metal cation.

This sequence belongs to the RNase HII family. Mn(2+) serves as cofactor. Mg(2+) is required as a cofactor.

It localises to the cytoplasm. It carries out the reaction Endonucleolytic cleavage to 5'-phosphomonoester.. Its function is as follows. Endonuclease that specifically degrades the RNA of RNA-DNA hybrids. The polypeptide is Ribonuclease HII (Koribacter versatilis (strain Ellin345)).